We begin with the raw amino-acid sequence, 215 residues long: Large ribosomal subunit protein uL4c (215 aa).

Residues 51-87 (QKQGTVSTKTRSEVRGGGKKPWRQKGTGRARAGSSRS) form a disordered region. A compositionally biased stretch (basic residues) spans 67–78 (GGKKPWRQKGTG).

The protein belongs to the universal ribosomal protein uL4 family. Part of the 50S ribosomal subunit.

It is found in the plastid. The protein localises to the chloroplast. Probably binds the 23S rRNA. In Thalassiosira pseudonana (Marine diatom), this protein is Large ribosomal subunit protein uL4c (rpl4).